We begin with the raw amino-acid sequence, 466 residues long: Chromosomal replication initiator protein DnaA (466 aa).

Residues 1-86 (MSLSLWQQCL…EVGTKPVTQT (86 aa)) form a domain I, interacts with DnaA modulators region. The domain II stretch occupies residues 86-129 (TLKTPVHNVVAPTQTTTAQPQRVAPAARSGWDNVPAPAEPTYRS). The domain III, AAA+ region stretch occupies residues 130-346 (NVNVKHTFDN…GALNRVIANA (217 aa)). The ATP site is built by Gly-174, Gly-176, Lys-177, and Thr-178. Residues 347-466 (NFTGRAITID…FSNLIRTLSS (120 aa)) form a domain IV, binds dsDNA region.

It belongs to the DnaA family. As to quaternary structure, oligomerizes as a right-handed, spiral filament on DNA at oriC.

The protein localises to the cytoplasm. Functionally, plays an essential role in the initiation and regulation of chromosomal replication. ATP-DnaA binds to the origin of replication (oriC) to initiate formation of the DNA replication initiation complex once per cell cycle. Binds the DnaA box (a 9 base pair repeat at the origin) and separates the double-stranded (ds)DNA. Forms a right-handed helical filament on oriC DNA; dsDNA binds to the exterior of the filament while single-stranded (ss)DNA is stabiized in the filament's interior. The ATP-DnaA-oriC complex binds and stabilizes one strand of the AT-rich DNA unwinding element (DUE), permitting loading of DNA polymerase. After initiation quickly degrades to an ADP-DnaA complex that is not apt for DNA replication. Binds acidic phospholipids. This Salmonella choleraesuis (strain SC-B67) protein is Chromosomal replication initiator protein DnaA.